The following is a 259-amino-acid chain: Deoxyribose-phosphate aldolase (259 aa).

Residue aspartate 102 is the Proton donor/acceptor of the active site. Lysine 167 (schiff-base intermediate with acetaldehyde) is an active-site residue. Lysine 201 acts as the Proton donor/acceptor in catalysis.

The protein belongs to the DeoC/FbaB aldolase family. DeoC type 2 subfamily.

It localises to the cytoplasm. It carries out the reaction 2-deoxy-D-ribose 5-phosphate = D-glyceraldehyde 3-phosphate + acetaldehyde. It functions in the pathway carbohydrate degradation; 2-deoxy-D-ribose 1-phosphate degradation; D-glyceraldehyde 3-phosphate and acetaldehyde from 2-deoxy-alpha-D-ribose 1-phosphate: step 2/2. Catalyzes a reversible aldol reaction between acetaldehyde and D-glyceraldehyde 3-phosphate to generate 2-deoxy-D-ribose 5-phosphate. The sequence is that of Deoxyribose-phosphate aldolase from Salmonella typhi.